Consider the following 249-residue polypeptide: Small ribosomal subunit protein uS3 (249 aa).

The KH type-2 domain occupies 39 to 108 (IRQLINKKLA…TVAVNVAEIP (70 aa)). Residues 214–249 (ETFARPQRRDRDERRPEGGDRPARRRPTARRRTGGE) form a disordered region. Residues 220-235 (QRRDRDERRPEGGDRP) are compositionally biased toward basic and acidic residues. Residues 236–249 (ARRRPTARRRTGGE) show a composition bias toward basic residues.

This sequence belongs to the universal ribosomal protein uS3 family. As to quaternary structure, part of the 30S ribosomal subunit. Forms a tight complex with proteins S10 and S14.

Functionally, binds the lower part of the 30S subunit head. Binds mRNA in the 70S ribosome, positioning it for translation. This Deinococcus radiodurans (strain ATCC 13939 / DSM 20539 / JCM 16871 / CCUG 27074 / LMG 4051 / NBRC 15346 / NCIMB 9279 / VKM B-1422 / R1) protein is Small ribosomal subunit protein uS3.